The following is a 361-amino-acid chain: Probable galacturonosyltransferase-like 7 (361 aa).

The chain crosses the membrane as a helical; Signal-anchor for type II membrane protein span at residues 1–21 (MLWIMRFSGLFSAALVIIVLS). The Lumenal segment spans residues 22-361 (PSLQSFPPAE…PYDLYGHYSR (340 aa)). N-linked (GlcNAc...) asparagine glycosylation is present at N217.

Belongs to the glycosyltransferase 8 family.

It localises to the golgi apparatus membrane. It functions in the pathway glycan metabolism; pectin biosynthesis. May be involved in pectin and/or xylans biosynthesis in cell walls. This Arabidopsis thaliana (Mouse-ear cress) protein is Probable galacturonosyltransferase-like 7 (GATL7).